The sequence spans 244 residues: MKAKEIIEFIETFAPKDLAIEGDNIGLQVGDNLDKEIKKLGIALDPSLSVIKKAEKEGVDFLFTHHPLLKDPIRNFTGVIYKKLKILMENDIILYSAHTNLDICKNGLNDALAELYNLENPKPLYDNGLGRVGIFKGSFEEFLEITKKYIHKNPIVVKSKEVDDNFKLAVLSGYGLSQSSIKYVAEKADVYLSGDLTHHSKILAEELGLVVVDATHYSTEVFGLKKFKEFLSSNLDLEIISLDF.

H65, H66, D102, H216, and E220 together coordinate a divalent metal cation.

It belongs to the GTP cyclohydrolase I type 2/NIF3 family. Homohexamer; trimer of dimers, that forms a hollow cage-like architecture.

In terms of biological role, DNA-binding protein exhibiting the ability to bind to both single-stranded and double-stranded DNA. This chain is GTP cyclohydrolase 1 type 2 homolog, found in Methanocaldococcus jannaschii (strain ATCC 43067 / DSM 2661 / JAL-1 / JCM 10045 / NBRC 100440) (Methanococcus jannaschii).